A 96-amino-acid polypeptide reads, in one-letter code: UPF0235 protein YPK_0828 (96 aa).

Belongs to the UPF0235 family.

The chain is UPF0235 protein YPK_0828 from Yersinia pseudotuberculosis serotype O:3 (strain YPIII).